A 64-amino-acid polypeptide reads, in one-letter code: Small ribosomal subunit protein bS21 (64 aa).

It belongs to the bacterial ribosomal protein bS21 family.

The protein is Small ribosomal subunit protein bS21 of Sulfurihydrogenibium sp. (strain YO3AOP1).